The primary structure comprises 633 residues: Phosphomethylpyrimidine synthase (633 aa).

Substrate-binding positions include asparagine 245, methionine 274, tyrosine 303, histidine 339, serine 359–glycine 361, aspartate 400–arginine 403, and glutamate 439. Histidine 443 provides a ligand contact to Zn(2+). Tyrosine 466 contacts substrate. Residue histidine 507 coordinates Zn(2+). [4Fe-4S] cluster-binding residues include cysteine 587, cysteine 590, and cysteine 595.

Belongs to the ThiC family. In terms of assembly, homodimer. Requires [4Fe-4S] cluster as cofactor.

It catalyses the reaction 5-amino-1-(5-phospho-beta-D-ribosyl)imidazole + S-adenosyl-L-methionine = 4-amino-2-methyl-5-(phosphooxymethyl)pyrimidine + CO + 5'-deoxyadenosine + formate + L-methionine + 3 H(+). The protein operates within cofactor biosynthesis; thiamine diphosphate biosynthesis. In terms of biological role, catalyzes the synthesis of the hydroxymethylpyrimidine phosphate (HMP-P) moiety of thiamine from aminoimidazole ribotide (AIR) in a radical S-adenosyl-L-methionine (SAM)-dependent reaction. The sequence is that of Phosphomethylpyrimidine synthase from Neisseria meningitidis serogroup A / serotype 4A (strain DSM 15465 / Z2491).